Reading from the N-terminus, the 257-residue chain is Short chain dehydrogenase helC (257 aa).

The signal sequence occupies residues 1–22 (MNTAIITGAAQGVGLCIAEALA). Position 13 (Val-13) interacts with NADP(+). Residue Asn-46 is glycosylated (N-linked (GlcNAc...) asparagine). Residues Asp-60 and Asn-87 each contribute to the NADP(+) site. Residue Asn-110 is glycosylated (N-linked (GlcNAc...) asparagine). NADP(+) is bound by residues Tyr-154, Lys-158, Ile-185, and Thr-187. Catalysis depends on Tyr-154, which acts as the Proton acceptor. The active-site Lowers pKa of active site Tyr is the Lys-158.

It belongs to the short-chain dehydrogenases/reductases (SDR) family.

Its pathway is mycotoxin biosynthesis. Functionally, short chain dehydrogenase; part of the gene cluster that mediates the biosynthesis of helvolic acid, an antibacterial nortriterpenoid. Protostadienol synthase helA cyclizes (3S)-oxidosqualene to (17Z)-protosta-17(20),24-dien-3-beta-ol (protostadienol). The synthesis of protostadienol is followed by several steps of monooxygenation, dehydrogenation, and acyl transfer to yield the final helvolic acid. Following the cyclization to the tetracyclic protostadienol by helA, cytochrome P450 monooxygenases helB1-mediated and helB2-mediated oxidation at C-4 and C-16, acyltransferase helD2-dependent acetylation of 16-OH, oxidation of C-21 by cytochrome P450 monooxygenase helB4, and short chain dehydrogenase helC-dependent oxidative decarboxylation yield the fusidane skeleton. This intermediate is further modified in three additional steps mediated by the cytochrome P450 monooxygenase helB3, the acyltransferase helD1, and the 3-ketosteroid 1-dehydrogenase helE to give helvolic acid. Compared with the late stages in the biosynthesis of helvolic acid, enzymes involved in the early stage modifications act in a relatively strict order. The hydroxylation of C-16 by helB1 and subsequent acetylation by helD2 should occur before the helB3-mediated oxidation of C-21. C-4 demethylation in fusidane-type antibiotics proceeds in an unusual manner though it is also achieved by oxidative decarboxylation. The methyl group at C-4 beta position is oxidized by helB1 and subsequently removed by the short chain dehydrogenase helC. The sequence is that of Short chain dehydrogenase helC from Aspergillus fumigatus (strain ATCC MYA-4609 / CBS 101355 / FGSC A1100 / Af293) (Neosartorya fumigata).